Consider the following 384-residue polypeptide: N-acetyldiaminopimelate deacetylase (384 aa).

The active site involves aspartate 74. Glutamate 133 acts as the Proton acceptor in catalysis.

It belongs to the peptidase M20A family. N-acetyldiaminopimelate deacetylase subfamily.

The catalysed reaction is N-acetyl-(2S,6S)-2,6-diaminopimelate + H2O = (2S,6S)-2,6-diaminopimelate + acetate. The protein operates within amino-acid biosynthesis; L-lysine biosynthesis via DAP pathway; LL-2,6-diaminopimelate from (S)-tetrahydrodipicolinate (acetylase route): step 3/3. Functionally, catalyzes the conversion of N-acetyl-diaminopimelate to diaminopimelate and acetate. The polypeptide is N-acetyldiaminopimelate deacetylase (Lactiplantibacillus plantarum (strain ATCC BAA-793 / NCIMB 8826 / WCFS1) (Lactobacillus plantarum)).